The chain runs to 86 residues: Small ribosomal subunit protein bS20 (86 aa).

It belongs to the bacterial ribosomal protein bS20 family.

Its function is as follows. Binds directly to 16S ribosomal RNA. This chain is Small ribosomal subunit protein bS20, found in Pelagibacter ubique (strain HTCC1062).